Consider the following 863-residue polypeptide: Protein translocase subunit SecA (863 aa).

ATP contacts are provided by residues Gln88, 106 to 110 (GEGKT), and Asp496. The disordered stretch occupies residues 818-842 (EVKTEPVITKKKPARNEPCPCGSGK). Positions 836, 838, 847, and 848 each coordinate Zn(2+).

It belongs to the SecA family. In terms of assembly, monomer and homodimer. Part of the essential Sec protein translocation apparatus which comprises SecA, SecYEG and auxiliary proteins SecDF-YajC and YidC. Zn(2+) serves as cofactor.

Its subcellular location is the cell inner membrane. The protein resides in the cytoplasm. The catalysed reaction is ATP + H2O + cellular proteinSide 1 = ADP + phosphate + cellular proteinSide 2.. Functionally, part of the Sec protein translocase complex. Interacts with the SecYEG preprotein conducting channel. Has a central role in coupling the hydrolysis of ATP to the transfer of proteins into and across the cell membrane, serving as an ATP-driven molecular motor driving the stepwise translocation of polypeptide chains across the membrane. The sequence is that of Protein translocase subunit SecA from Nitratiruptor sp. (strain SB155-2).